The primary structure comprises 94 residues: Large ribosomal subunit protein bL27 (94 aa).

Positions 1–9 (MLELNLQLF) are excised as a propeptide. The tract at residues 12–33 (KKGGGSTSNGRDSQAKRLGAKA) is disordered.

Belongs to the bacterial ribosomal protein bL27 family. The N-terminus is cleaved by ribosomal processing cysteine protease Prp.

In Lactococcus lactis subsp. cremoris (strain MG1363), this protein is Large ribosomal subunit protein bL27.